Reading from the N-terminus, the 231-residue chain is Cytochrome c oxidase assembly factor 7 (231 aa).

Ala-2 carries the post-translational modification N-acetylalanine. 5 Sel1-like repeats span residues 34–66, 68–104, 108–146, 147–183, and 184–219; these read PEGC…EKYG, GDSC…EKPG, VESC…DGGY, AASC…DLGH, and VWAC…QLHK.

This sequence belongs to the hcp beta-lactamase family. Interacts with CHCHD4/MIA40 through transient intermolecular disulfide bonds.

It localises to the mitochondrion intermembrane space. Required for assembly of mitochondrial respiratory chain complex I and complex IV. The chain is Cytochrome c oxidase assembly factor 7 (Coa7) from Mus musculus (Mouse).